Reading from the N-terminus, the 170-residue chain is Elicitin-like protein 1 (170 aa).

The first 19 residues, 1–19, serve as a signal peptide directing secretion; that stretch reads MFSKTLVVLAAVAAVTVNG. 3 disulfides stabilise this stretch: Cys25–Cys91, Cys47–Cys76, and Cys71–Cys118. Residues 122 to 170 form a disordered region; the sequence is GGGSTPTTAPPTSTTPTTAPPTGTTPTTAPPAGTTPGVTPSPTTPKPAC. The segment covering 126 to 162 has biased composition (low complexity); it reads TPTTAPPTSTTPTTAPPTGTTPTTAPPAGTTPGVTPS.

This sequence belongs to the elicitin family.

It is found in the secreted. In terms of biological role, induces local and distal defense responses (incompatible hypersensitive reaction) in plants from the solanaceae and cruciferae families. Elicits leaf necrosis and causes the accumulation of pathogenesis-related proteins. Might interact with the lipidic molecules of the plasma membrane. The chain is Elicitin-like protein 1 (POD-1) from Pythium oligandrum (Mycoparasitic fungus).